We begin with the raw amino-acid sequence, 452 residues long: uncharacterized protein (452 aa).

The protein belongs to the HypE family.

This is an uncharacterized protein from Methanocaldococcus jannaschii (strain ATCC 43067 / DSM 2661 / JAL-1 / JCM 10045 / NBRC 100440) (Methanococcus jannaschii).